The sequence spans 263 residues: Shikimate dehydrogenase (NADP(+)) (263 aa).

Shikimate-binding positions include 14–16 (SLS) and Thr60. Lys64 (proton acceptor) is an active-site residue. The shikimate site is built by Asn85 and Asp100. NADP(+) contacts are provided by residues 123–127 (GAGGA), 146–151 (NRTPQR), and Leu205. Tyr207 provides a ligand contact to shikimate. Residue Gly228 coordinates NADP(+). Gln235 lines the shikimate pocket.

The protein belongs to the shikimate dehydrogenase family. Homodimer.

It carries out the reaction shikimate + NADP(+) = 3-dehydroshikimate + NADPH + H(+). The protein operates within metabolic intermediate biosynthesis; chorismate biosynthesis; chorismate from D-erythrose 4-phosphate and phosphoenolpyruvate: step 4/7. Functionally, involved in the biosynthesis of the chorismate, which leads to the biosynthesis of aromatic amino acids. Catalyzes the reversible NADPH linked reduction of 3-dehydroshikimate (DHSA) to yield shikimate (SA). This Thermus thermophilus (strain ATCC 27634 / DSM 579 / HB8) protein is Shikimate dehydrogenase (NADP(+)).